The chain runs to 447 residues: Growth/differentiation factor 7 (447 aa).

The signal sequence occupies residues 1–19 (MDLSAAAALCLWLLSACRP). The propeptide occupies 20–318 (RDGLEAAAVL…AVTAGRRRRR (299 aa)). N-linked (GlcNAc...) asparagine glycosylation is present at Asn-80. Residues 292–346 (LAAQPPPDPGTGTGSPRAVTAGRRRRRTALAGTRTAQGSGGGAGRGHGRRGRSRC) are disordered. Positions 337–346 (GHGRRGRSRC) are enriched in basic residues. Disulfide bonds link Cys-346-Cys-412, Cys-375-Cys-444, and Cys-379-Cys-446.

The protein belongs to the TGF-beta family. Homodimer; disulfide-linked. In terms of tissue distribution, highly expressed in the primary aera of brain neocortex.

The protein localises to the secreted. In terms of biological role, may play an active role in the motor area of the primate neocortex. The sequence is that of Growth/differentiation factor 7 (GDF7) from Chlorocebus aethiops (Green monkey).